Consider the following 433-residue polypeptide: Glutamate-1-semialdehyde 2,1-aminomutase (433 aa).

At Lys266 the chain carries N6-(pyridoxal phosphate)lysine.

The protein belongs to the class-III pyridoxal-phosphate-dependent aminotransferase family. HemL subfamily. Homodimer. It depends on pyridoxal 5'-phosphate as a cofactor.

Its subcellular location is the cytoplasm. The catalysed reaction is (S)-4-amino-5-oxopentanoate = 5-aminolevulinate. The protein operates within porphyrin-containing compound metabolism; protoporphyrin-IX biosynthesis; 5-aminolevulinate from L-glutamyl-tRNA(Glu): step 2/2. This is Glutamate-1-semialdehyde 2,1-aminomutase from Psychrobacter cryohalolentis (strain ATCC BAA-1226 / DSM 17306 / VKM B-2378 / K5).